The following is a 603-amino-acid chain: Probable GMP synthase [glutamine-hydrolyzing] (603 aa).

The Glutamine amidotransferase type-1 domain maps to 6-195 (KIAVVDFGGQ…FIQICGVSKT (190 aa)). The Nucleophile role is filled by Cys-81. Catalysis depends on residues His-170 and Glu-172. Residues 196–392 (WGIDQFLKEK…LGLESEWVGR (197 aa)) enclose the GMPS ATP-PPase domain. ATP is bound at residue 224–230 (SGGVDST).

As to quaternary structure, homodimer.

The catalysed reaction is XMP + L-glutamine + ATP + H2O = GMP + L-glutamate + AMP + diphosphate + 2 H(+). The protein operates within purine metabolism; GMP biosynthesis; GMP from XMP (L-Gln route): step 1/1. Functionally, catalyzes the synthesis of GMP from XMP. This chain is Probable GMP synthase [glutamine-hydrolyzing] (guaA), found in Leptospira interrogans serogroup Icterohaemorrhagiae serovar copenhageni (strain Fiocruz L1-130).